Here is a 133-residue protein sequence, read N- to C-terminus: Small ribosomal subunit protein uS8 (133 aa).

It belongs to the universal ribosomal protein uS8 family. Part of the 30S ribosomal subunit. Contacts proteins S5 and S12.

Functionally, one of the primary rRNA binding proteins, it binds directly to 16S rRNA central domain where it helps coordinate assembly of the platform of the 30S subunit. In Mycoplasmoides gallisepticum (strain R(low / passage 15 / clone 2)) (Mycoplasma gallisepticum), this protein is Small ribosomal subunit protein uS8.